The following is a 166-amino-acid chain: Phosphopantetheine adenylyltransferase (166 aa).

Position 9 (serine 9) interacts with substrate. ATP is bound by residues 9 to 10 and histidine 17; that span reads SF. Positions 41, 74, and 88 each coordinate substrate. ATP is bound by residues 89 to 91, glutamate 99, and 123 to 129; these read GLR and YIHLSST.

It belongs to the bacterial CoaD family. Homohexamer. The cofactor is Mg(2+).

The protein localises to the cytoplasm. It carries out the reaction (R)-4'-phosphopantetheine + ATP + H(+) = 3'-dephospho-CoA + diphosphate. It participates in cofactor biosynthesis; coenzyme A biosynthesis; CoA from (R)-pantothenate: step 4/5. Reversibly transfers an adenylyl group from ATP to 4'-phosphopantetheine, yielding dephospho-CoA (dPCoA) and pyrophosphate. This is Phosphopantetheine adenylyltransferase from Pseudarthrobacter chlorophenolicus (strain ATCC 700700 / DSM 12829 / CIP 107037 / JCM 12360 / KCTC 9906 / NCIMB 13794 / A6) (Arthrobacter chlorophenolicus).